Here is a 70-residue protein sequence, read N- to C-terminus: Deleted in esophageal cancer 1 (70 aa).

In terms of tissue distribution, expressed in many tissues, with highest expression in prostate and testis. Reduced expression in esophageal carcinomas.

In terms of biological role, candidate tumor suppressor. The polypeptide is Deleted in esophageal cancer 1 (Homo sapiens (Human)).